The following is a 1567-amino-acid chain: Transmembrane protein 131 homolog (1567 aa).

The N-terminal stretch at 1–32 (MPTQVQMRPLLRIFAEPILLILIFLFTLGAKG) is a signal peptide. At 33-1049 (EKVLQETFLG…RPGWESSLKN (1017 aa)) the chain is on the lumenal side. Residues 55–228 (RLVPSRLDFG…TLKPVIRISF (174 aa)) are papD-L domain. N-linked (GlcNAc...) asparagine glycosylation is found at asparagine 84, asparagine 114, asparagine 168, asparagine 235, asparagine 316, asparagine 317, asparagine 342, asparagine 372, asparagine 409, asparagine 462, asparagine 563, asparagine 890, and asparagine 1013. Residues 1050–1070 (AALVVLLASFGLVLVAAVFDA) traverse the membrane as a helical segment. Residues 1071 to 1567 (KAIMVQQNAY…SQRNNHNHMN (497 aa)) lie on the Cytoplasmic side of the membrane. Residues 1096-1130 (RNIVKLQAEEAAAKAESVQQQQKVKNGQLKELRKR) are a coiled coil. Disordered stretches follow at residues 1112 to 1337 (SVQQ…SPDA), 1364 to 1386 (PTDN…IGDN), and 1502 to 1567 (PGLE…NHMN). 2 stretches are compositionally biased toward low complexity: residues 1132–1150 (VVNS…SPWS) and 1166–1183 (KTVV…APAA). Phosphoserine is present on residues serine 1201 and serine 1258. Polar residues predominate over residues 1247–1259 (AKSSPPQQENISP). The span at 1284–1298 (PGRERERERRSKDQK) shows a compositional bias: basic and acidic residues. The segment covering 1319–1331 (KLNFGQTTNSTSP) has biased composition (polar residues). Polar residues-rich tracts occupy residues 1507–1519 (SARQ…QEQV) and 1536–1561 (LPTQ…SQRN).

Belongs to the TMEM131 family. In terms of assembly, may interact (via PapD-L domain) with collagen proteins (via C-terminus); the interaction is direct and is involved in assembly and TRAPPIII ER-to-Golgi transport complex-dependent secretion of collagen.

It localises to the membrane. In terms of biological role, collagen binding transmembrane protein involved in collagen secretion, probably by recruiting the ER-to-Golgi transport complex TRAPPIII. This is Transmembrane protein 131 homolog from Drosophila melanogaster (Fruit fly).